The primary structure comprises 249 residues: MASLGVNIDHIANIREARRTVEPDPVSMALLAELGGADGITVHLREDRRHIQDRDVELLRQTVRSRLNLEMASTEEMVAIALRIKPDMVTLVPERREEVTTEGGLDVAGQKASLSAMVQTLQAAGIPVSLFVDPEATQLQACKNTGACWVELHTGRYADADWSTQPQELARLQEGTAIAQQLGLRVNAGHGLTYQNVEPIAAIAGMEELNIGHTIVARSVAVGLQQAVRDMKVLVQNPRLDPLFGQAPG.

Asparagine 7 is a 3-amino-2-oxopropyl phosphate binding site. Position 9–10 (9–10 (DH)) interacts with 1-deoxy-D-xylulose 5-phosphate. Arginine 18 provides a ligand contact to 3-amino-2-oxopropyl phosphate. Catalysis depends on histidine 43, which acts as the Proton acceptor. 1-deoxy-D-xylulose 5-phosphate is bound by residues arginine 45 and histidine 50. Glutamate 70 serves as the catalytic Proton acceptor. A 1-deoxy-D-xylulose 5-phosphate-binding site is contributed by threonine 100. The active-site Proton donor is the histidine 190. 3-amino-2-oxopropyl phosphate-binding positions include glycine 191 and 212–213 (GH).

This sequence belongs to the PNP synthase family. Homooctamer; tetramer of dimers.

It localises to the cytoplasm. The enzyme catalyses 3-amino-2-oxopropyl phosphate + 1-deoxy-D-xylulose 5-phosphate = pyridoxine 5'-phosphate + phosphate + 2 H2O + H(+). The protein operates within cofactor biosynthesis; pyridoxine 5'-phosphate biosynthesis; pyridoxine 5'-phosphate from D-erythrose 4-phosphate: step 5/5. Its function is as follows. Catalyzes the complicated ring closure reaction between the two acyclic compounds 1-deoxy-D-xylulose-5-phosphate (DXP) and 3-amino-2-oxopropyl phosphate (1-amino-acetone-3-phosphate or AAP) to form pyridoxine 5'-phosphate (PNP) and inorganic phosphate. The polypeptide is Pyridoxine 5'-phosphate synthase (Synechococcus sp. (strain CC9605)).